A 174-amino-acid polypeptide reads, in one-letter code: Large ribosomal subunit protein uL10 (174 aa).

Belongs to the universal ribosomal protein uL10 family. In terms of assembly, part of the ribosomal stalk of the 50S ribosomal subunit. The N-terminus interacts with L11 and the large rRNA to form the base of the stalk. The C-terminus forms an elongated spine to which L12 dimers bind in a sequential fashion forming a multimeric L10(L12)X complex.

Forms part of the ribosomal stalk, playing a central role in the interaction of the ribosome with GTP-bound translation factors. This Vesicomyosocius okutanii subsp. Calyptogena okutanii (strain HA) protein is Large ribosomal subunit protein uL10.